A 299-amino-acid chain; its full sequence is Taste receptor type 2 member 45 (299 aa).

A topological domain (extracellular) is located at residue methionine 1. Residues 2-22 form a helical membrane-spanning segment; it reads ITFLPIIFSILVVVTFVIGNF. At 23 to 55 the chain is on the cytoplasmic side; that stretch reads ANGFIALVNSTEWVKRQKISFADQIVTALAVSR. The chain crosses the membrane as a helical span at residues 56-76; that stretch reads VGLLWVLLLNWYSTVLNPAFC. Topologically, residues 77-98 are extracellular; sequence SVELRTTAYNIWAVTGHFSNWP. The chain crosses the membrane as a helical span at residues 99–119; sequence ATSLSIFYLLKIANFSNLIFL. The Cytoplasmic segment spans residues 120–126; that stretch reads RLKRRVK. A helical transmembrane segment spans residues 127–147; it reads SVILVVLLGPLLFLACHLFVV. Residues 148-178 are Extracellular-facing; sequence NMNQIVWTKEYEGNMTWKIKLRRAMYLSDTT. Asparagine 161 carries N-linked (GlcNAc...) asparagine glycosylation. The helical transmembrane segment at 179-199 threads the bilayer; that stretch reads VTMLANLVPFTVTLISFLLLV. Over 200 to 229 the chain is Cytoplasmic; the sequence is CSLCKHLKKMQLHGKGSQDPSTKVHIKVLQ. The helical transmembrane segment at 230–250 threads the bilayer; that stretch reads TVISFFLLRAIYFVSVIISVW. At 251–259 the chain is on the extracellular side; sequence SFKNLENKP. A helical membrane pass occupies residues 260 to 280; it reads VFMFCQAIGFSCSSAHPFILI. Residues 281–299 are Cytoplasmic-facing; that stretch reads WGNKKLKQTYLSVLWQMRY.

Belongs to the G-protein coupled receptor T2R family. In terms of tissue distribution, expressed in subsets of taste receptor cells of the tongue and exclusively in gustducin-positive cells.

Its subcellular location is the membrane. In terms of biological role, receptor that may play a role in the perception of bitterness and is gustducin-linked. May play a role in sensing the chemical composition of the gastrointestinal content. The activity of this receptor may stimulate alpha gustducin, mediate PLC-beta-2 activation and lead to the gating of TRPM5. The chain is Taste receptor type 2 member 45 (TAS2R45) from Homo sapiens (Human).